Here is a 149-residue protein sequence, read N- to C-terminus: Transcriptional repressor NrdR (149 aa).

The segment at 3–34 is a zinc-finger region; the sequence is CPFCSATDTKVIDSRLVADGHQVRRRRECVQC. The region spanning 49–139 is the ATP-cone domain; the sequence is PRVVKQDGSR…VYRAFEDVSE (91 aa).

Belongs to the NrdR family. Requires Zn(2+) as cofactor.

In terms of biological role, negatively regulates transcription of bacterial ribonucleotide reductase nrd genes and operons by binding to NrdR-boxes. This is Transcriptional repressor NrdR from Shewanella piezotolerans (strain WP3 / JCM 13877).